The sequence spans 143 residues: 3-dehydroquinate dehydratase (143 aa).

Tyrosine 21 functions as the Proton acceptor in the catalytic mechanism. 3 residues coordinate substrate: asparagine 73, histidine 79, and aspartate 86. The Proton donor role is filled by histidine 99. Residues 100 to 101 (IS) and arginine 110 each bind substrate.

It belongs to the type-II 3-dehydroquinase family. In terms of assembly, homododecamer.

It catalyses the reaction 3-dehydroquinate = 3-dehydroshikimate + H2O. It participates in metabolic intermediate biosynthesis; chorismate biosynthesis; chorismate from D-erythrose 4-phosphate and phosphoenolpyruvate: step 3/7. Functionally, catalyzes a trans-dehydration via an enolate intermediate. The chain is 3-dehydroquinate dehydratase from Deinococcus radiodurans (strain ATCC 13939 / DSM 20539 / JCM 16871 / CCUG 27074 / LMG 4051 / NBRC 15346 / NCIMB 9279 / VKM B-1422 / R1).